The sequence spans 115 residues: Phosphoribosyl-AMP cyclohydrolase (115 aa).

Residue aspartate 80 participates in Mg(2+) binding. Cysteine 81 lines the Zn(2+) pocket. 2 residues coordinate Mg(2+): aspartate 82 and aspartate 84. Residues cysteine 97 and cysteine 104 each coordinate Zn(2+).

This sequence belongs to the PRA-CH family. Homodimer. It depends on Mg(2+) as a cofactor. Zn(2+) serves as cofactor.

It localises to the cytoplasm. It catalyses the reaction 1-(5-phospho-beta-D-ribosyl)-5'-AMP + H2O = 1-(5-phospho-beta-D-ribosyl)-5-[(5-phospho-beta-D-ribosylamino)methylideneamino]imidazole-4-carboxamide. Its pathway is amino-acid biosynthesis; L-histidine biosynthesis; L-histidine from 5-phospho-alpha-D-ribose 1-diphosphate: step 3/9. Catalyzes the hydrolysis of the adenine ring of phosphoribosyl-AMP. The chain is Phosphoribosyl-AMP cyclohydrolase from Rhodococcus erythropolis (strain PR4 / NBRC 100887).